The primary structure comprises 574 residues: Sulfate adenylyltransferase (574 aa).

The tract at residues 1–170 is N-terminal; that stretch reads MANTPHGGVL…LEAINRLEHY (170 aa). Residues 171-395 form a catalytic region; sequence DFLDLRFTPS…LREENPLPAE (225 aa). Position 198 (Gln-198) interacts with sulfate. ATP-binding positions include 198 to 201 and 292 to 295; these read QTRN and GRDH. Catalysis depends on residues Thr-199, Arg-200, and Asn-201. Sulfate is bound at residue Arg-200. Ala-296 contributes to the sulfate binding site. An ATP-binding site is contributed by Met-334. The interval 396–574 is allosteric regulation domain; adenylyl-sulfate kinase-like; it reads KGFTVFMTGY…LESNGLLDRL (179 aa). 3'-phosphoadenylyl sulfate is bound by residues 435 to 438, Arg-452, 478 to 479, and Lys-516; these read ENVR and IA.

The protein in the N-terminal section; belongs to the sulfate adenylyltransferase family. In the C-terminal section; belongs to the APS kinase family. In terms of assembly, homohexamer. Dimer of trimers.

It localises to the cytoplasm. The catalysed reaction is sulfate + ATP + H(+) = adenosine 5'-phosphosulfate + diphosphate. It functions in the pathway sulfur metabolism; hydrogen sulfide biosynthesis; sulfite from sulfate: step 1/3. With respect to regulation, allosterically inhibited by 3'-phosphoadenosine 5'-phosphosulfate (PAPS). Its function is as follows. Catalyzes the first intracellular reaction of sulfate assimilation, forming adenosine-5'-phosphosulfate (APS) from inorganic sulfate and ATP. Plays an important role in sulfate activation as a component of the biosynthesis pathway of sulfur-containing amino acids. The sequence is that of Sulfate adenylyltransferase from Gibberella zeae (strain ATCC MYA-4620 / CBS 123657 / FGSC 9075 / NRRL 31084 / PH-1) (Wheat head blight fungus).